An 87-amino-acid chain; its full sequence is Cell division topological specificity factor (87 aa).

The protein belongs to the MinE family.

In terms of biological role, prevents the cell division inhibition by proteins MinC and MinD at internal division sites while permitting inhibition at polar sites. This ensures cell division at the proper site by restricting the formation of a division septum at the midpoint of the long axis of the cell. This is Cell division topological specificity factor from Chelativorans sp. (strain BNC1).